We begin with the raw amino-acid sequence, 459 residues long: Chromosomal replication initiator protein DnaA (459 aa).

The domain I, interacts with DnaA modulators stretch occupies residues methionine 1–histidine 73. Residues histidine 73–threonine 117 are domain II. The tract at residues glutamate 118–isoleucine 334 is domain III, AAA+ region. Residues glycine 162, glycine 164, lysine 165, and threonine 166 each contribute to the ATP site. Residues serine 335–serine 459 are domain IV, binds dsDNA.

It belongs to the DnaA family. In terms of assembly, oligomerizes as a right-handed, spiral filament on DNA at oriC.

It is found in the cytoplasm. In terms of biological role, plays an essential role in the initiation and regulation of chromosomal replication. ATP-DnaA binds to the origin of replication (oriC) to initiate formation of the DNA replication initiation complex once per cell cycle. Binds the DnaA box (a 9 base pair repeat at the origin) and separates the double-stranded (ds)DNA. Forms a right-handed helical filament on oriC DNA; dsDNA binds to the exterior of the filament while single-stranded (ss)DNA is stabiized in the filament's interior. The ATP-DnaA-oriC complex binds and stabilizes one strand of the AT-rich DNA unwinding element (DUE), permitting loading of DNA polymerase. After initiation quickly degrades to an ADP-DnaA complex that is not apt for DNA replication. Binds acidic phospholipids. This Nostoc punctiforme (strain ATCC 29133 / PCC 73102) protein is Chromosomal replication initiator protein DnaA.